Here is a 1323-residue protein sequence, read N- to C-terminus: ABC transporter C family member 12 (1323 aa).

The 287-residue stretch at 110–396 folds into the ABC transmembrane type-1 1 domain; that stretch reads HCISLFFYSI…LPILIALGIQ (287 aa). Helical transmembrane passes span 111-131, 152-172, 227-247, 252-272, 338-358, and 375-395; these read CISL…PEIL, MGYY…FCNY, VFGI…CLAL, IGWP…FNGL, ILIA…FSTY, and SYLN…ALGI. Residues 428 to 652 form the ABC transporter 1 domain; it reads VYMKNSTTTW…KLEFASLLQE (225 aa). Position 464–471 (464–471) interacts with ATP; that stretch reads GSVGSGKS. The segment at 657–695 is disordered; that stretch reads ENTKGDDSDDDDDKKDDDKKEEKVEKPKQSDKDGTLISE. The segment covering 672-690 has biased composition (basic and acidic residues); sequence DDDKKEEKVEKPKQSDKDG. Helical transmembrane passes span 712-732, 772-792, 840-860, 862-882, and 952-972; these read VTAG…LETG, IYIG…FSFF, LIAT…ATLI, ISII…LFFI, and WLGL…CIFI. The ABC transmembrane type-1 2 domain maps to 720-1010; it reads FLFAMILFLL…GVLQAADTET (291 aa). The 235-residue stretch at 1047–1281 folds into the ABC transporter 2 domain; the sequence is IKFDNLVMRY…QNGLLTWLVN (235 aa). Position 1081 to 1088 (1081 to 1088) interacts with ATP; it reads GRTGAGKS.

The protein belongs to the ABC transporter superfamily. ABCC family. Conjugate transporter (TC 3.A.1.208) subfamily.

The protein localises to the membrane. This is ABC transporter C family member 12 (abcC12) from Dictyostelium discoideum (Social amoeba).